A 96-amino-acid polypeptide reads, in one-letter code: Aspartyl/glutamyl-tRNA(Asn/Gln) amidotransferase subunit C (96 aa).

It belongs to the GatC family. In terms of assembly, heterotrimer of A, B and C subunits.

The catalysed reaction is L-glutamyl-tRNA(Gln) + L-glutamine + ATP + H2O = L-glutaminyl-tRNA(Gln) + L-glutamate + ADP + phosphate + H(+). It catalyses the reaction L-aspartyl-tRNA(Asn) + L-glutamine + ATP + H2O = L-asparaginyl-tRNA(Asn) + L-glutamate + ADP + phosphate + 2 H(+). Allows the formation of correctly charged Asn-tRNA(Asn) or Gln-tRNA(Gln) through the transamidation of misacylated Asp-tRNA(Asn) or Glu-tRNA(Gln) in organisms which lack either or both of asparaginyl-tRNA or glutaminyl-tRNA synthetases. The reaction takes place in the presence of glutamine and ATP through an activated phospho-Asp-tRNA(Asn) or phospho-Glu-tRNA(Gln). This Deinococcus deserti (strain DSM 17065 / CIP 109153 / LMG 22923 / VCD115) protein is Aspartyl/glutamyl-tRNA(Asn/Gln) amidotransferase subunit C.